Consider the following 529-residue polypeptide: Tyrosinase (529 aa).

The first 18 residues, 1-18 (MLLAVLYCLLWSFQTSAG), serve as a signal peptide directing secretion. Residues 19–476 (HFPRACVSSK…YLEQASRIWS (458 aa)) lie on the Lumenal, melanosome side of the membrane. 3 N-linked (GlcNAc...) asparagine glycosylation sites follow: Asn-86, Asn-111, and Asn-161. His-180, His-202, and His-211 together coordinate Cu cation. N-linked (GlcNAc...) asparagine glycosylation occurs at Asn-230. The segment at 287–313 (SLCNGTPEGPLRRNPGNHDKSRTPRLP) is disordered. Residue Asn-337 is glycosylated (N-linked (GlcNAc...) asparagine). 2 residues coordinate Cu cation: His-363 and His-367. Asn-371 carries an N-linked (GlcNAc...) asparagine glycan. His-390 contacts Cu cation. Residues 477–497 (WLLGAAMVGAVLTALLAGLVS) form a helical membrane-spanning segment. Residues 498–529 (LLCRHKRKQLPEEKQPLLMEKEDYHSLYQSHL) are Cytoplasmic-facing.

It belongs to the tyrosinase family. In terms of assembly, forms an OPN3-dependent complex with DCT in response to blue light in melanocytes. The cofactor is Cu(2+). Post-translationally, glycosylated.

The protein resides in the melanosome membrane. The protein localises to the melanosome. The catalysed reaction is 2 L-dopa + O2 = 2 L-dopaquinone + 2 H2O. The enzyme catalyses L-tyrosine + O2 = L-dopaquinone + H2O. It carries out the reaction 2 5,6-dihydroxyindole-2-carboxylate + O2 = 2 indole-5,6-quinone-2-carboxylate + 2 H2O. In terms of biological role, this is a copper-containing oxidase that functions in the formation of pigments such as melanins and other polyphenolic compounds. Catalyzes the initial and rate limiting step in the cascade of reactions leading to melanin production from tyrosine. In addition to hydroxylating tyrosine to DOPA (3,4-dihydroxyphenylalanine), also catalyzes the oxidation of DOPA to DOPA-quinone, and possibly the oxidation of DHI (5,6-dihydroxyindole) to indole-5,6 quinone. This is Tyrosinase from Homo sapiens (Human).